A 44-amino-acid chain; its full sequence is uncharacterized protein (44 aa).

The segment at L22–N44 is disordered.

This is an uncharacterized protein from Dictyostelium discoideum (Social amoeba).